We begin with the raw amino-acid sequence, 776 residues long: Reticulon-1 (776 aa).

4 disordered regions span residues 1 to 101 (MAAP…KDGE), 137 to 168 (SESPEELGTPGPSLPDVPGIESRGLFSSDSGI), 205 to 245 (VKHQ…PAPV), and 285 to 580 (LTEI…APPP). Residue Ser-327 is modified to Phosphoserine. Over residues 328–341 (PGSITPPSSGTEPS) the composition is skewed to low complexity. 3 positions are modified to phosphoserine: Ser-350, Ser-352, and Ser-487. The segment covering 497–511 (AIREETGVRAEERAP) has biased composition (basic and acidic residues). The Reticulon domain occupies 589–776 (AIDLLYWRDI…KIPGAKRHAE (188 aa)). 2 consecutive transmembrane segments (helical) span residues 603 to 623 (IVFGSFLLLLFSLTQFSVVSV) and 705 to 725 (FAVLMWLLTYVGALFNGLTLL).

Interacts with NDRG1. Interacts with BACE1. As to quaternary structure, interacts with TMEM33. In terms of assembly, interacts with UGCG; regulates the ceramide glucosyltransferase activity of UGCG. Isoforms RTN1-A and RTN1-B are phosphorylated. As to expression, expressed in neural and neuroendocrine tissues and cell cultures derived therefrom. Expression of isoform RTN1-C is strongly correlated with neuronal differentiation.

The protein resides in the endoplasmic reticulum membrane. Its subcellular location is the golgi apparatus membrane. In terms of biological role, inhibits amyloid precursor protein processing, probably by blocking BACE1 activity. This Homo sapiens (Human) protein is Reticulon-1 (RTN1).